The primary structure comprises 484 residues: tRNA sulfurtransferase (484 aa).

The THUMP domain maps to 63–167 (REMIERLTCT…DQRLYVIHNQ (105 aa)). Residues 185-186 (LM), Lys267, Gly289, and Gln298 each bind ATP. Cysteines 346 and 457 form a disulfide. Positions 405-483 (ALPGQIVIDI…GHANVRVYRP (79 aa)) constitute a Rhodanese domain. Cys457 acts as the Cysteine persulfide intermediate in catalysis.

Belongs to the ThiI family.

The protein localises to the cytoplasm. It carries out the reaction [ThiI sulfur-carrier protein]-S-sulfanyl-L-cysteine + a uridine in tRNA + 2 reduced [2Fe-2S]-[ferredoxin] + ATP + H(+) = [ThiI sulfur-carrier protein]-L-cysteine + a 4-thiouridine in tRNA + 2 oxidized [2Fe-2S]-[ferredoxin] + AMP + diphosphate. The enzyme catalyses [ThiS sulfur-carrier protein]-C-terminal Gly-Gly-AMP + S-sulfanyl-L-cysteinyl-[cysteine desulfurase] + AH2 = [ThiS sulfur-carrier protein]-C-terminal-Gly-aminoethanethioate + L-cysteinyl-[cysteine desulfurase] + A + AMP + 2 H(+). It participates in cofactor biosynthesis; thiamine diphosphate biosynthesis. Functionally, catalyzes the ATP-dependent transfer of a sulfur to tRNA to produce 4-thiouridine in position 8 of tRNAs, which functions as a near-UV photosensor. Also catalyzes the transfer of sulfur to the sulfur carrier protein ThiS, forming ThiS-thiocarboxylate. This is a step in the synthesis of thiazole, in the thiamine biosynthesis pathway. The sulfur is donated as persulfide by IscS. In Pseudomonas putida (strain ATCC 47054 / DSM 6125 / CFBP 8728 / NCIMB 11950 / KT2440), this protein is tRNA sulfurtransferase.